The sequence spans 474 residues: Proline--tRNA ligase (474 aa).

Belongs to the class-II aminoacyl-tRNA synthetase family. ProS type 3 subfamily. In terms of assembly, homodimer.

It localises to the cytoplasm. It carries out the reaction tRNA(Pro) + L-proline + ATP = L-prolyl-tRNA(Pro) + AMP + diphosphate. Functionally, catalyzes the attachment of proline to tRNA(Pro) in a two-step reaction: proline is first activated by ATP to form Pro-AMP and then transferred to the acceptor end of tRNA(Pro). The sequence is that of Proline--tRNA ligase from Mycoplasma mycoides subsp. mycoides SC (strain CCUG 32753 / NCTC 10114 / PG1).